Here is a 1404-residue protein sequence, read N- to C-terminus: DNA-directed RNA polymerase subunit beta' (1404 aa).

Positions 70, 72, 85, and 88 each coordinate Zn(2+). D460, D462, and D464 together coordinate Mg(2+). Zn(2+)-binding residues include C825, C899, C906, and C909.

The protein belongs to the RNA polymerase beta' chain family. As to quaternary structure, the RNAP catalytic core consists of 2 alpha, 1 beta, 1 beta' and 1 omega subunit. When a sigma factor is associated with the core the holoenzyme is formed, which can initiate transcription. Mg(2+) is required as a cofactor. The cofactor is Zn(2+).

It catalyses the reaction RNA(n) + a ribonucleoside 5'-triphosphate = RNA(n+1) + diphosphate. In terms of biological role, DNA-dependent RNA polymerase catalyzes the transcription of DNA into RNA using the four ribonucleoside triphosphates as substrates. This is DNA-directed RNA polymerase subunit beta' from Nitrosomonas eutropha (strain DSM 101675 / C91 / Nm57).